A 98-amino-acid chain; its full sequence is Large ribosomal subunit protein bL27 (98 aa).

Positions 1-9 (MLKMNLQLF) are excised as a propeptide.

This sequence belongs to the bacterial ribosomal protein bL27 family. The N-terminus is cleaved by ribosomal processing cysteine protease Prp.

The polypeptide is Large ribosomal subunit protein bL27 (Desulfitobacterium hafniense (strain DSM 10664 / DCB-2)).